A 150-amino-acid chain; its full sequence is Protein U1 (150 aa).

Belongs to the nanovirus U1 protein family.

The chain is Protein U1 (DNA-U1) from Astragalus sinicus (Chinese milk vetch).